The sequence spans 459 residues: Elongation factor 1-alpha (459 aa).

Glycine 2 carries the n,N,N-trimethylglycine modification. Lysine 3 bears the N6,N6-dimethyllysine; alternate mark. Lysine 3 carries the post-translational modification N6-methyllysine; alternate. Residues lysine 5 to serine 240 enclose the tr-type G domain. Positions glycine 14–serine 21 are G1. Residue glycine 14–serine 21 coordinates GTP. Residue lysine 30 is modified to N6-methyllysine. The segment at valine 70–aspartate 74 is G2. At lysine 79 the chain carries N6,N6,N6-trimethyllysine. The segment at aspartate 91–glycine 94 is G3. Residues aspartate 91 to histidine 95 and asparagine 153 to aspartate 156 each bind GTP. The segment at asparagine 153–aspartate 156 is G4. Positions serine 192–tryptophan 194 are G5. At lysine 316 the chain carries N6,N6-dimethyllysine; alternate. Lysine 316 carries the post-translational modification N6-methyllysine; alternate. N6-methyllysine is present on lysine 390.

It belongs to the TRAFAC class translation factor GTPase superfamily. Classic translation factor GTPase family. EF-Tu/EF-1A subfamily.

It localises to the cytoplasm. Its function is as follows. This protein promotes the GTP-dependent binding of aminoacyl-tRNA to the A-site of ribosomes during protein biosynthesis. This chain is Elongation factor 1-alpha (TEF), found in Blastobotrys adeninivorans (Yeast).